A 456-amino-acid polypeptide reads, in one-letter code: Equilibrative nucleoside transporter 1 (456 aa).

Residues 2 to 12 (TTSHQPQDRYK) lie on the Cytoplasmic side of the membrane. A helical membrane pass occupies residues 13–29 (AVWLIFFMLGLGTLLPW). Residues 30–82 (NFFMTATQYFTNRLDMSQNVSLVTAELSKDAQASAAPAAPLPERNSLSAIFNN) are Extracellular-facing. Asparagine 48 carries an N-linked (GlcNAc...) asparagine glycan. Residues 83-107 (VMTLCAMLPLLLFTYLNSFLHQRIP) form a helical membrane-spanning segment. The Cytoplasmic portion of the chain corresponds to 108 to 111 (QSVR). A helical transmembrane segment spans residues 112–130 (ILGSLVAILLVFLITAILV). Over 131 to 138 (KVQLDALP) the chain is Extracellular. Residues 139 to 157 (FFVITMIKIVLINSFGAIL) traverse the membrane as a helical segment. Topologically, residues 158-174 (QGSLFGLAGLLPASYTA) are cytoplasmic. Residues 175 to 199 (PIMSGQGLAGFFASVAMICAIASGS) form a helical membrane-spanning segment. Residues 200-206 (ELSESAF) are Extracellular-facing. The chain crosses the membrane as a helical span at residues 207–227 (GYFITACAVIILTIICYLGLP). Topologically, residues 228–291 (RLEFYRYYQQ…IKAILKNISV (64 aa)) are cytoplasmic. Phosphoserine is present on residues serine 254, serine 269, and serine 273. Positions 254–266 (SKGEEPRAGKEES) are enriched in basic and acidic residues. The disordered stretch occupies residues 254–276 (SKGEEPRAGKEESGVSVSNSQPT). A helical transmembrane segment spans residues 292 to 311 (LAFSVCFIFTITIGMFPAVT). The Extracellular segment spans residues 312-323 (VEVKSSIAGSST). Residues 324–342 (WERYFIPVSCFLTFNIFDW) form a helical membrane-spanning segment. Residues 343-359 (LGRSLTAVFMWPGKDSR) lie on the Cytoplasmic side of the membrane. The helical transmembrane segment at 360–378 (WLPSLVLARLVFVPLLLLC) threads the bilayer. The Extracellular segment spans residues 379–393 (NIKPRRYLTVVFEHD). The chain crosses the membrane as a helical span at residues 394-413 (AWFIFFMAAFAFSNGYLASL). Topologically, residues 414–431 (CMCFGPKKVKPAEAETAG) are cytoplasmic. Residues 432–452 (AIMAFFLCLGLALGAVFSFLF) form a helical membrane-spanning segment. The Extracellular segment spans residues 453–456 (RAIV).

Belongs to the SLC29A/ENT transporter (TC 2.A.57) family. In terms of assembly, identified in a complex with STOM. Post-translationally, glycosylated. Expressed in testis at the blood-testis barrier (at protein level). Detected in erythrocytes (at protein level). Expressed at relatively high levels in cerebral cortex, particularly the frontal and parietal lobes, and the thalamus and basal ganglia (at protein level). In the midbrain expressed at moderate levels, whereas in the other areas of the brainstem, namely medulla and pons, cerebellum and the hippocampus expressed at lower amounts when compared to the other brain regions (at protein level). Expressed in Langerhans cells and lymphocytes in the pancreas (at protein level). Expressed in kidney, in polarized renal epithelial cells. Expressed in adipose tissues. Expressed in placenta. Expressed in small intestine.

The protein resides in the basolateral cell membrane. Its subcellular location is the apical cell membrane. It localises to the cell membrane. The catalysed reaction is adenosine(in) = adenosine(out). It catalyses the reaction guanosine(in) = guanosine(out). It carries out the reaction inosine(in) = inosine(out). The enzyme catalyses uridine(out) = uridine(in). The catalysed reaction is thymidine(in) = thymidine(out). It catalyses the reaction cytidine(in) = cytidine(out). It carries out the reaction adenine(out) = adenine(in). The enzyme catalyses guanine(out) = guanine(in). The catalysed reaction is thymine(out) = thymine(in). It catalyses the reaction uracil(in) = uracil(out). It carries out the reaction hypoxanthine(out) = hypoxanthine(in). With respect to regulation, transporter activity is sensitive to low concentrations of the inhibitor nitrobenzylmercaptopurine riboside (NBMPR). Inhibited by dilazep. Inhibited by dipyridamole. Inhibited by hypoxanthine. Inhibited by azidothymidine (AZT). Inhibited by dideoxycytidine (ddC). Inhibited by dideoxyinosine (ddI). Inhibited by draflazine. Inhibited by soluflazine. Inhibited by cladribine. Inhibited by capecitabine. Inhibited by clofarabine. Inhibited by ribavirin. Modestly inhibited by acyclovir. Modestly inhibited by 5-fluorouracil. In terms of biological role, uniporter involved in the facilitative transport of nucleosides and nucleobases, and contributes to maintaining their cellular homeostasis. Functions as a Na(+)-independent transporter. Involved in the transport of nucleosides such as adenosine, guanosine, inosine, uridine, thymidine and cytidine. Also transports purine nucleobases (hypoxanthine, adenine, guanine) and pyrimidine nucleobases (thymine, uracil). Mediates basolateral nucleoside uptake into Sertoli cells, thereby regulating the transport of nucleosides in testis across the blood-testis barrier. Regulates inosine levels in brown adipocytes tissues (BAT) and extracellular inosine levels, which controls BAT-dependent energy expenditure. This Homo sapiens (Human) protein is Equilibrative nucleoside transporter 1.